Reading from the N-terminus, the 427-residue chain is Trigger factor (427 aa).

Positions 160-240 constitute a PPIase FKBP-type domain; sequence GDTLIGDVTK…VKEVKRLELP (81 aa).

The protein belongs to the FKBP-type PPIase family. Tig subfamily.

Its subcellular location is the cytoplasm. It catalyses the reaction [protein]-peptidylproline (omega=180) = [protein]-peptidylproline (omega=0). Functionally, involved in protein export. Acts as a chaperone by maintaining the newly synthesized protein in an open conformation. Functions as a peptidyl-prolyl cis-trans isomerase. The sequence is that of Trigger factor from Chlorobaculum parvum (strain DSM 263 / NCIMB 8327) (Chlorobium vibrioforme subsp. thiosulfatophilum).